Consider the following 341-residue polypeptide: S-adenosylmethionine:tRNA ribosyltransferase-isomerase (341 aa).

It belongs to the QueA family. Monomer.

Its subcellular location is the cytoplasm. It carries out the reaction 7-aminomethyl-7-carbaguanosine(34) in tRNA + S-adenosyl-L-methionine = epoxyqueuosine(34) in tRNA + adenine + L-methionine + 2 H(+). It functions in the pathway tRNA modification; tRNA-queuosine biosynthesis. Functionally, transfers and isomerizes the ribose moiety from AdoMet to the 7-aminomethyl group of 7-deazaguanine (preQ1-tRNA) to give epoxyqueuosine (oQ-tRNA). The polypeptide is S-adenosylmethionine:tRNA ribosyltransferase-isomerase (Clostridium botulinum (strain Eklund 17B / Type B)).